The following is a 274-amino-acid chain: Single-stranded DNA-binding protein WHY1, chloroplastic (274 aa).

The N-terminal 54 residues, 1 to 54, are a transit peptide targeting the chloroplast; it reads MSNFSLSPSPTSGFSLNLQNPTKTSYLSFSSSINTIFAPLSSNTTKSFSGLTHK. Residues 100-105 are required for ssDNA binding; the sequence is KGKAAL. The Nuclear localization signal motif lies at 178–191; it reads KGRSDEGRVRKVLK. Residues 253–274 are disordered; the sequence is PEDASRSNNANPRSGAELEWNR.

The protein belongs to the Whirly family. As to quaternary structure, homotetramer.

It is found in the nucleus. The protein localises to the plastid. The protein resides in the chloroplast. Its function is as follows. Single-stranded DNA-binding protein that acts as a transcriptional activator of the pathogenesis-related gene PR-10a. Upon elicitation, binds a 30bp promoter sequence known as elicitor element response (ERE) and is required for PR-10a expression. In Solanum tuberosum (Potato), this protein is Single-stranded DNA-binding protein WHY1, chloroplastic (WHY1).